The sequence spans 201 residues: Ran-specific GTPase-activating protein 1 (201 aa).

2 stretches are compositionally biased toward basic and acidic residues: residues 1-17 (MSSEDKKPVVDKKEEAA) and 32-66 (KKAEKPETKKDEEDTKEETKKEGDDAPESPDIHFE). Residues 1–66 (MSSEDKKPVV…APESPDIHFE (66 aa)) are disordered. Serine 60 carries the phosphoserine modification. A RanBD1 domain is found at 64–200 (HFEPVVHLEK…FEKAQEINKK (137 aa)).

It belongs to the RANBP1 family. In terms of assembly, interacts with GSP1 and PRP20.

It localises to the cytoplasm. It is found in the nucleus. Functionally, important for the export of protein containing nuclear export signal (NES) out of the nucleus. Stimulates the GTPase activity of GSP1 and GSP2. This chain is Ran-specific GTPase-activating protein 1 (YRB1), found in Saccharomyces cerevisiae (strain ATCC 204508 / S288c) (Baker's yeast).